We begin with the raw amino-acid sequence, 104 residues long: L-rhamnose mutarotase (104 aa).

Y18 contributes to the substrate binding site. The Proton donor role is filled by H22. Residues Y41 and 76 to 77 (WW) each bind substrate.

This sequence belongs to the rhamnose mutarotase family. As to quaternary structure, homodimer.

The protein localises to the cytoplasm. The enzyme catalyses alpha-L-rhamnose = beta-L-rhamnose. The protein operates within carbohydrate metabolism; L-rhamnose metabolism. Involved in the anomeric conversion of L-rhamnose. The chain is L-rhamnose mutarotase from Yersinia pseudotuberculosis serotype O:1b (strain IP 31758).